We begin with the raw amino-acid sequence, 230 residues long: Large ribosomal subunit protein bL25 (230 aa).

It belongs to the bacterial ribosomal protein bL25 family. CTC subfamily. Part of the 50S ribosomal subunit; part of the 5S rRNA/L5/L18/L25 subcomplex. Contacts the 5S rRNA. Binds to the 5S rRNA independently of L5 and L18.

Functionally, this is one of the proteins that binds to the 5S RNA in the ribosome where it forms part of the central protuberance. The sequence is that of Large ribosomal subunit protein bL25 (rplY) from Rhodopseudomonas palustris (strain ATCC BAA-98 / CGA009).